Reading from the N-terminus, the 336-residue chain is Dihydroorotate dehydrogenase (quinone) (336 aa).

Residues 62-66 (AGLDK) and T86 each bind FMN. K66 serves as a coordination point for substrate. 111–115 (NRMGF) lines the substrate pocket. The FMN site is built by N139 and N172. Residue N172 participates in substrate binding. S175 (nucleophile) is an active-site residue. Position 177 (N177) interacts with substrate. FMN-binding residues include K217 and T245. Position 246 to 247 (246 to 247 (NT)) interacts with substrate. Residues G268, G297, and 318 to 319 (YS) contribute to the FMN site.

It belongs to the dihydroorotate dehydrogenase family. Type 2 subfamily. Monomer. It depends on FMN as a cofactor.

It is found in the cell membrane. It catalyses the reaction (S)-dihydroorotate + a quinone = orotate + a quinol. It participates in pyrimidine metabolism; UMP biosynthesis via de novo pathway; orotate from (S)-dihydroorotate (quinone route): step 1/1. Catalyzes the conversion of dihydroorotate to orotate with quinone as electron acceptor. The polypeptide is Dihydroorotate dehydrogenase (quinone) (Sodalis glossinidius (strain morsitans)).